Here is a 119-residue protein sequence, read N- to C-terminus: Large ribosomal subunit protein bL20c (119 aa).

Belongs to the bacterial ribosomal protein bL20 family.

It localises to the plastid. The protein localises to the chloroplast. Binds directly to 23S ribosomal RNA and is necessary for the in vitro assembly process of the 50S ribosomal subunit. It is not involved in the protein synthesizing functions of that subunit. The polypeptide is Large ribosomal subunit protein bL20c (Oedogonium cardiacum (Filamentous green alga)).